A 96-amino-acid chain; its full sequence is Co-chaperonin GroES (96 aa).

This sequence belongs to the GroES chaperonin family. Heptamer of 7 subunits arranged in a ring. Interacts with the chaperonin GroEL.

The protein resides in the cytoplasm. Its function is as follows. Together with the chaperonin GroEL, plays an essential role in assisting protein folding. The GroEL-GroES system forms a nano-cage that allows encapsulation of the non-native substrate proteins and provides a physical environment optimized to promote and accelerate protein folding. GroES binds to the apical surface of the GroEL ring, thereby capping the opening of the GroEL channel. In Leptospira borgpetersenii serovar Hardjo-bovis (strain JB197), this protein is Co-chaperonin GroES.